The primary structure comprises 79 residues: Large ribosomal subunit protein uL24 (79 aa).

Belongs to the universal ribosomal protein uL24 family. In terms of assembly, part of the 50S ribosomal subunit.

Functionally, one of two assembly initiator proteins, it binds directly to the 5'-end of the 23S rRNA, where it nucleates assembly of the 50S subunit. One of the proteins that surrounds the polypeptide exit tunnel on the outside of the subunit. This chain is Large ribosomal subunit protein uL24, found in Aliarcobacter butzleri (strain RM4018) (Arcobacter butzleri).